Here is an 83-residue protein sequence, read N- to C-terminus: Small ribosomal subunit protein uS17 (83 aa).

The protein belongs to the universal ribosomal protein uS17 family. As to quaternary structure, part of the 30S ribosomal subunit.

In terms of biological role, one of the primary rRNA binding proteins, it binds specifically to the 5'-end of 16S ribosomal RNA. The chain is Small ribosomal subunit protein uS17 from Francisella tularensis subsp. tularensis (strain FSC 198).